Here is a 262-residue protein sequence, read N- to C-terminus: tRNA pseudouridine synthase A (262 aa).

Catalysis depends on Asp-51, which acts as the Nucleophile. A substrate-binding site is contributed by Tyr-109.

It belongs to the tRNA pseudouridine synthase TruA family. As to quaternary structure, homodimer.

The catalysed reaction is uridine(38/39/40) in tRNA = pseudouridine(38/39/40) in tRNA. Functionally, formation of pseudouridine at positions 38, 39 and 40 in the anticodon stem and loop of transfer RNAs. This chain is tRNA pseudouridine synthase A, found in Actinobacillus pleuropneumoniae serotype 5b (strain L20).